We begin with the raw amino-acid sequence, 457 residues long: Aromatic amino acid transport protein AroP (457 aa).

The Cytoplasmic portion of the chain corresponds to 1 to 19 (MMEGQQHGEQLKRGLKNRH). The chain crosses the membrane as a helical span at residues 20–40 (IQLIALGGAIGTGLFLGSASV). Topologically, residues 41–42 (IQ) are periplasmic. The helical transmembrane segment at 43-63 (SAGPGIILGYAIAGFIAFLIM) threads the bilayer. Residues 64-86 (RQLGEMVVEEPVAGSFSHFAYKY) are Cytoplasmic-facing. A helical membrane pass occupies residues 87–107 (WGSFAGFASGWNYWVLYVLVA). Topologically, residues 108–117 (MAELTAVGKY) are periplasmic. A helical membrane pass occupies residues 118–138 (IQFWYPEIPTWVSAAVFFVVI). Topologically, residues 139–155 (NAINLTNVTVFGEMEFW) are cytoplasmic. The chain crosses the membrane as a helical span at residues 156 to 176 (FAIIKVIAVVAMIIFGGWLLF). Topologically, residues 177 to 201 (SGNGGPQASVSNLWDQGGFLPHGFT) are periplasmic. The chain crosses the membrane as a helical span at residues 202–222 (GLVMMMAIIMFSFGGLELVGI). Topologically, residues 223 to 240 (TAAEADNPEQSIPKATNQ) are cytoplasmic. The chain crosses the membrane as a helical span at residues 241 to 261 (VIYRILIFYIGSLAVLLSLMP). Residues 262 to 271 (WTRVTADTSP) are Periplasmic-facing. The chain crosses the membrane as a helical span at residues 272-292 (FVLIFHELGDTFVANALNIVV). The Cytoplasmic portion of the chain corresponds to 293-333 (LTAALSVYNSCVYCNSRMLFGLAQQGNAPKALASVDKRGVP). Residues 334–354 (VNTILVSALVTALCVLINYLA) form a helical membrane-spanning segment. Residues 355 to 358 (PESA) lie on the Periplasmic side of the membrane. The chain crosses the membrane as a helical span at residues 359-379 (FGLLMALVVSALVINWAMISL). Residues 380–407 (AHMKFRRAKQEQGVVTRFPALLYPLGNW) lie on the Cytoplasmic side of the membrane. A helical transmembrane segment spans residues 408–428 (ICLLFMAVVLVIMLMTPGMAI). Residue serine 429 is a topological domain, periplasmic. The helical transmembrane segment at 430–450 (VYLIPVWLVVLGIGYLFKEKT) threads the bilayer. Residues 451–457 (AKAVKAH) lie on the Cytoplasmic side of the membrane.

The protein belongs to the amino acid-polyamine-organocation (APC) superfamily. Amino acid transporter (AAT) (TC 2.A.3.1) family.

It is found in the cell inner membrane. It catalyses the reaction L-phenylalanine(in) + H(+)(in) = L-phenylalanine(out) + H(+)(out). The catalysed reaction is L-tryptophan(in) + H(+)(in) = L-tryptophan(out) + H(+)(out). It carries out the reaction L-tyrosine(in) + H(+)(in) = L-tyrosine(out) + H(+)(out). In terms of biological role, permease that is involved in the active transport across the cytoplasmic membrane of all three aromatic amino acids, phenylalanine, tyrosine and tryptophan. This is Aromatic amino acid transport protein AroP (aroP) from Escherichia coli O157:H7.